Reading from the N-terminus, the 47-residue chain is Defensin-like protein 1 (47 aa).

Cystine bridges form between Cys3-Cys47, Cys14-Cys34, Cys20-Cys41, and Cys24-Cys43.

As to quaternary structure, monomer and homodimer.

Its function is as follows. Inhibits trypsin but not chymotrypsin. The protein is Defensin-like protein 1 of Vigna unguiculata (Cowpea).